Here is a 228-residue protein sequence, read N- to C-terminus: Cytidylate kinase (228 aa).

12–20 (GPSGSGKGT) provides a ligand contact to ATP.

This sequence belongs to the cytidylate kinase family. Type 1 subfamily.

The protein localises to the cytoplasm. It catalyses the reaction CMP + ATP = CDP + ADP. The catalysed reaction is dCMP + ATP = dCDP + ADP. This is Cytidylate kinase from Pseudomonas entomophila (strain L48).